Consider the following 154-residue polypeptide: Nitrogen regulatory protein (154 aa).

A PTS EIIA type-2 domain is found at 6-150 (QILTPGRSLV…EALYQIVVDV (145 aa)). The active-site Tele-phosphohistidine intermediate is the His68.

Its subcellular location is the cytoplasm. Functionally, seems to have a role in regulating nitrogen assimilation. The chain is Nitrogen regulatory protein (ptsN) from Pseudomonas aeruginosa (strain ATCC 15692 / DSM 22644 / CIP 104116 / JCM 14847 / LMG 12228 / 1C / PRS 101 / PAO1).